A 198-amino-acid polypeptide reads, in one-letter code: Phosphoheptose isomerase (198 aa).

The SIS domain occupies 36 to 198 (MIGSLLNNGK…DCLLLGVEDQ (163 aa)). Position 51-53 (51-53 (NGG)) interacts with substrate. Zn(2+) contacts are provided by His60 and Glu64. Substrate-binding positions include Glu64, 93–94 (ND), 119–121 (STS), Ser124, and Gln174. 2 residues coordinate Zn(2+): Gln174 and His182.

The protein belongs to the SIS family. GmhA subfamily. Homotetramer. It depends on Zn(2+) as a cofactor.

Its subcellular location is the cytoplasm. The catalysed reaction is 2 D-sedoheptulose 7-phosphate = D-glycero-alpha-D-manno-heptose 7-phosphate + D-glycero-beta-D-manno-heptose 7-phosphate. The protein operates within carbohydrate biosynthesis; D-glycero-D-manno-heptose 7-phosphate biosynthesis; D-glycero-alpha-D-manno-heptose 7-phosphate and D-glycero-beta-D-manno-heptose 7-phosphate from sedoheptulose 7-phosphate: step 1/1. Its function is as follows. Catalyzes the isomerization of sedoheptulose 7-phosphate in D-glycero-D-manno-heptose 7-phosphate. The protein is Phosphoheptose isomerase of Aromatoleum aromaticum (strain DSM 19018 / LMG 30748 / EbN1) (Azoarcus sp. (strain EbN1)).